Reading from the N-terminus, the 330-residue chain is MTTNNQNAVTVTVTGAGGQIGYSLLFRIAKGEVFGDRVVNLRLLETEQGVQAARGVALELADCAFPLLGEVSITTELSEGFKDANAVFLVGAKPRQKGEERADLLAANGKIFGPQGKAIAEYAADDVRVIVVGNPANTNAAIVAAHAEGLDPRRVTALTRLDHNRGLAQVADKLGVAVRDLKNMTVWGNHSASQFPDVAELTLNGEKVADKLDAAWVNDEFIPRVAKRGAEIIEVRGRSSAASAASAALDHMRDWVNGTAEGDWVSVALPSDGSYGIPEGLVFSFPCRSVDGEWEIVQGLEISPAQQERIDANIKELQEEKAAVEEAGLL.

NAD(+) is bound at residue 15 to 21 (GAGGQIG). Substrate contacts are provided by arginine 95 and arginine 101. NAD(+) contacts are provided by residues asparagine 108, glutamine 115, and 132–134 (VGN). 2 residues coordinate substrate: asparagine 134 and arginine 165. Catalysis depends on histidine 190, which acts as the Proton acceptor.

It belongs to the LDH/MDH superfamily. MDH type 2 family.

The enzyme catalyses (S)-malate + NAD(+) = oxaloacetate + NADH + H(+). Catalyzes the reversible oxidation of malate to oxaloacetate. The sequence is that of Malate dehydrogenase from Corynebacterium jeikeium (strain K411).